A 44-amino-acid chain; its full sequence is Large ribosomal subunit protein bL34 (44 aa).

Belongs to the bacterial ribosomal protein bL34 family.

The sequence is that of Large ribosomal subunit protein bL34 from Variovorax paradoxus (strain S110).